Consider the following 120-residue polypeptide: Large ribosomal subunit protein eL18 (120 aa).

This sequence belongs to the eukaryotic ribosomal protein eL18 family.

In Thermococcus onnurineus (strain NA1), this protein is Large ribosomal subunit protein eL18.